Consider the following 409-residue polypeptide: LL-diaminopimelate aminotransferase (409 aa).

Tyr-15 and Gly-42 together coordinate substrate. Residues Tyr-72, 108–109 (SK), Tyr-132, Asn-187, Tyr-218, and 246–248 (SFS) contribute to the pyridoxal 5'-phosphate site. Substrate-binding residues include Lys-109, Tyr-132, and Asn-187. The residue at position 249 (Lys-249) is an N6-(pyridoxal phosphate)lysine. Arg-257 and Asn-292 together coordinate pyridoxal 5'-phosphate. Residues Asn-292 and Arg-388 each contribute to the substrate site.

The protein belongs to the class-I pyridoxal-phosphate-dependent aminotransferase family. LL-diaminopimelate aminotransferase subfamily. As to quaternary structure, homodimer. It depends on pyridoxal 5'-phosphate as a cofactor.

The catalysed reaction is (2S,6S)-2,6-diaminopimelate + 2-oxoglutarate = (S)-2,3,4,5-tetrahydrodipicolinate + L-glutamate + H2O + H(+). It functions in the pathway amino-acid biosynthesis; L-lysine biosynthesis via DAP pathway; LL-2,6-diaminopimelate from (S)-tetrahydrodipicolinate (aminotransferase route): step 1/1. Functionally, involved in the synthesis of meso-diaminopimelate (m-DAP or DL-DAP), required for both lysine and peptidoglycan biosynthesis. Catalyzes the direct conversion of tetrahydrodipicolinate to LL-diaminopimelate. The polypeptide is LL-diaminopimelate aminotransferase (Acaryochloris marina (strain MBIC 11017)).